Consider the following 476-residue polypeptide: Growth/differentiation factor 10 (476 aa).

An N-terminal signal peptide occupies residues 1–29 (MAPGPARISLGSQLLPMVPLLLLLRGAGC). Residues 30–366 (GHRGPSWSSL…EKTMQKARRR (337 aa)) constitute a propeptide that is removed on maturation. Residues 39–63 (LPSAAAGLQGDRDSQQSPGDAAAAL) are disordered. 3 N-linked (GlcNAc...) asparagine glycosylation sites follow: Asn-114, Asn-152, and Asn-277. The interval 268-301 (GDFEPGAAPNSSADPRVRRAAQVSKPLQDNELPG) is disordered. Cystine bridges form between Cys-374-Cys-441, Cys-403-Cys-473, and Cys-407-Cys-475. Asn-467 is a glycosylation site (N-linked (GlcNAc...) asparagine).

It belongs to the TGF-beta family. As to quaternary structure, homodimer or heterodimer. Can form a non-covalent complex of the mature region and the pro-region. In terms of tissue distribution, highly expressed in epididymal adipose tissue, brain, bone and aorta and to a lesser extent in liver and spleen. Expressed at higher levels in preadipocytes than in mature adipocytes. Strongly expressed in glial cells of the cerebellum.

It is found in the secreted. In terms of biological role, growth factor involved in osteogenesis and adipogenesis. Plays an inhibitory role in the process of osteoblast differentiation via SMAD2/3 pathway. Plays an inhibitory role in the process of adipogenesis. The chain is Growth/differentiation factor 10 from Mus musculus (Mouse).